A 292-amino-acid polypeptide reads, in one-letter code: Glyoxylase B2 (292 aa).

Zn(2+) contacts are provided by His-72, His-74, Asp-76, His-77, His-148, and Asp-166. Substrate is bound by residues 175–181, 208–210, and 284–287; these read TARCDFP, HDY, and KIPL. His-208 contacts Zn(2+).

Belongs to the metallo-beta-lactamase superfamily. Glyoxalase II family. It depends on Zn(2+) as a cofactor.

The chain is Glyoxylase B2 (gloB2) from Dictyostelium discoideum (Social amoeba).